Consider the following 258-residue polypeptide: Type III pantothenate kinase (258 aa).

6-13 (DIGNTNTV) provides a ligand contact to ATP. Residues Tyr-100 and 107–110 (GADR) contribute to the substrate site. Asp-109 serves as the catalytic Proton acceptor. Asp-129 contacts K(+). Residue Thr-132 participates in ATP binding. A substrate-binding site is contributed by Thr-185.

The protein belongs to the type III pantothenate kinase family. Homodimer. It depends on NH4(+) as a cofactor. K(+) serves as cofactor.

The protein localises to the cytoplasm. It carries out the reaction (R)-pantothenate + ATP = (R)-4'-phosphopantothenate + ADP + H(+). It functions in the pathway cofactor biosynthesis; coenzyme A biosynthesis; CoA from (R)-pantothenate: step 1/5. Functionally, catalyzes the phosphorylation of pantothenate (Pan), the first step in CoA biosynthesis. This Syntrophobacter fumaroxidans (strain DSM 10017 / MPOB) protein is Type III pantothenate kinase.